The sequence spans 688 residues: Methionine--tRNA ligase (688 aa).

The 'HIGH' region motif lies at 13–23; it reads PYANGQIHIGH. Residues cysteine 144, cysteine 147, cysteine 157, and cysteine 160 each contribute to the Zn(2+) site. The short motif at 335-339 is the 'KMSKS' region element; the sequence is KMSKS. Lysine 338 serves as a coordination point for ATP. The 107-residue stretch at 582–688 folds into the tRNA-binding domain; that stretch reads DFAKIDLRVA…SGAVPGMRIG (107 aa).

This sequence belongs to the class-I aminoacyl-tRNA synthetase family. MetG type 1 subfamily. In terms of assembly, homodimer. Zn(2+) is required as a cofactor.

It localises to the cytoplasm. It catalyses the reaction tRNA(Met) + L-methionine + ATP = L-methionyl-tRNA(Met) + AMP + diphosphate. Its function is as follows. Is required not only for elongation of protein synthesis but also for the initiation of all mRNA translation through initiator tRNA(fMet) aminoacylation. This is Methionine--tRNA ligase from Cupriavidus pinatubonensis (strain JMP 134 / LMG 1197) (Cupriavidus necator (strain JMP 134)).